The sequence spans 128 residues: Sulfurtransferase TusD (128 aa).

Catalysis depends on Cys-78, which acts as the Cysteine persulfide intermediate.

The protein belongs to the DsrE/TusD family. As to quaternary structure, heterohexamer, formed by a dimer of trimers. The hexameric TusBCD complex contains 2 copies each of TusB, TusC and TusD. The TusBCD complex interacts with TusE.

The protein localises to the cytoplasm. Functionally, part of a sulfur-relay system required for 2-thiolation of 5-methylaminomethyl-2-thiouridine (mnm(5)s(2)U) at tRNA wobble positions. Accepts sulfur from TusA and transfers it in turn to TusE. This Shigella boydii serotype 18 (strain CDC 3083-94 / BS512) protein is Sulfurtransferase TusD.